The following is a 309-amino-acid chain: Sporulation sigma-E factor-processing peptidase (309 aa).

5 consecutive transmembrane segments (helical) span residues 7–27 (VIWLLNFCFDALLLLLTAFIL), 36–55 (LVGGAFIGSSIVLLMFTPFS), 61–78 (PAGKLAFSVVIVVVTFGF), 88–105 (LFSFYFATFLMGGGIIGA), and 130–147 (PISWLFIVGGFPALWFFS). Residue Asp-183 is part of the active site.

Belongs to the peptidase U4 family. As to quaternary structure, self-associates. Interacts with SigE. Interacts with SpoIIR.

It localises to the cell membrane. Functionally, probable aspartic protease that is responsible for the proteolytic cleavage of the RNA polymerase sigma E factor (SigE/spoIIGB) to yield the active peptide in the mother cell during sporulation. Responds to a signal from the forespore that is triggered by the extracellular signal protein SpoIIR. The sequence is that of Sporulation sigma-E factor-processing peptidase (spoIIGA) from Bacillus subtilis (strain 168).